The chain runs to 342 residues: Signal-regulatory protein beta-2 (342 aa).

A signal peptide spans 1 to 32 (MCSTMSAPTCLAHLPPCFLLLALVLVPSDASG). Ig-like V-type domains lie at 33-143 (QSSR…KSDE) and 157-258 (PDLW…SGQG). Topologically, residues 33 to 287 (QSSRNDWQVL…EPATEMSPTG (255 aa)) are extracellular. The cysteines at positions 60 and 127 are disulfide-linked. 3 N-linked (GlcNAc...) asparagine glycosylation sites follow: Asn-116, Asn-179, and Asn-231. Cysteines 180 and 242 form a disulfide. Residues 288 to 308 (LLVVFAPVVLGLKAITLAALL) form a helical membrane-spanning segment. Residues 309–342 (LALATSRRSPGQEDVKTTGPAGAMNTLAWSKGQE) lie on the Cytoplasmic side of the membrane. The interval 317–342 (SPGQEDVKTTGPAGAMNTLAWSKGQE) is disordered.

The protein resides in the membrane. This Homo sapiens (Human) protein is Signal-regulatory protein beta-2 (SIRPB2).